Reading from the N-terminus, the 596-residue chain is MHRYRSHHCAALRKCDVGIKARLSGWVHRVRDHGGILFVDLRDHFGITQIVADPASPAFKIIEKVRSEWVIRVDGEVRARSDEVINTSLPTGEIEIFAKEVEILSKSDELPLPVFGEPDYPEDIRLKYRFLDLRRETMHRNIMRRTEIIAAIRRSMQENGFTEFTTPLLTASSPEGARDFLVPSRIHQGKFYALPQAPQQYKQLLMMSGFDRYFQIAPCFRDEDPRADRLPGEFYQLDVEMSFVEQEDVLVTMEPIMRSLFEEFADGKPVTQSFPRLSYEEAMRKYGSDKPDLRNPIIMEDVSQHFYDSGFKVFAQILANDENARVWAIPAKTGGSRAFCDRMNGWAQSEGQPGLGYIFWREEQGKFEGAGPIAKNIGEQRTEALRMQLGLENGDACFFVAGDPKKFLPFAGAARTRVGEELDLVDRDCFSLAWIVDFPFFEWNEEEKKLDFAHNPFSMPQGGKDALECQDPLTLKAFQYDLVCNGYEIASGGIRNHSPEMMLKVFNLAGLSKEVVEDRFGGLYRAFHYGAPPHGGMAAGVDRIIMLLQGVKNLREVALFPMNQQALDLLMSAPSDVSPVQLRDLGIRIAPAAKND.

Glu175 contacts L-aspartate. The interval 199–202 is aspartate; it reads QQYK. Arg221 and His454 together coordinate L-aspartate. 221-223 serves as a coordination point for ATP; that stretch reads RDE. Residue Glu488 coordinates ATP. Arg495 is a binding site for L-aspartate. Residue 540–543 coordinates ATP; that stretch reads GVDR.

It belongs to the class-II aminoacyl-tRNA synthetase family. Type 1 subfamily. In terms of assembly, homodimer.

The protein localises to the cytoplasm. It carries out the reaction tRNA(Asx) + L-aspartate + ATP = L-aspartyl-tRNA(Asx) + AMP + diphosphate. In terms of biological role, aspartyl-tRNA synthetase with relaxed tRNA specificity since it is able to aspartylate not only its cognate tRNA(Asp) but also tRNA(Asn). Reaction proceeds in two steps: L-aspartate is first activated by ATP to form Asp-AMP and then transferred to the acceptor end of tRNA(Asp/Asn). This chain is Aspartate--tRNA(Asp/Asn) ligase, found in Bartonella henselae (strain ATCC 49882 / DSM 28221 / CCUG 30454 / Houston 1) (Rochalimaea henselae).